The sequence spans 639 residues: Serine protease HtrA-like (639 aa).

4 stretches are compositionally biased toward basic and acidic residues: residues 1–13 (MDND…PREQ), 21–75 (YFHN…EIHQ), 106–187 (QQLK…KESS), and 195–205 (KSQKIEQKEQK). The interval 1-262 (MDNDKKHVIP…LENEPKNNDT (262 aa)) is disordered. Residues 206 to 219 (ASSNETSNKELNSY) show a composition bias toward polar residues. Basic and acidic residues-rich tracts occupy residues 220–235 (TKDK…DLKK) and 245–262 (NKLE…NNDT). The chain crosses the membrane as a helical span at residues 277–297 (IVIVVAIILIVILISAIISTM). Residues H374, D404, and S489 each act as charge relay system in the active site. The PDZ domain maps to 527 to 629 (EIAEELEKKG…TLSAKIYREG (103 aa)).

Belongs to the peptidase S1C family.

The protein localises to the cell membrane. The polypeptide is Serine protease HtrA-like (Staphylococcus haemolyticus (strain JCSC1435)).